A 257-amino-acid polypeptide reads, in one-letter code: Tryptophan synthase alpha chain (257 aa).

Catalysis depends on proton acceptor residues Glu-47 and Asp-58.

The protein belongs to the TrpA family. As to quaternary structure, tetramer of two alpha and two beta chains.

The catalysed reaction is (1S,2R)-1-C-(indol-3-yl)glycerol 3-phosphate + L-serine = D-glyceraldehyde 3-phosphate + L-tryptophan + H2O. Its pathway is amino-acid biosynthesis; L-tryptophan biosynthesis; L-tryptophan from chorismate: step 5/5. The alpha subunit is responsible for the aldol cleavage of indoleglycerol phosphate to indole and glyceraldehyde 3-phosphate. The polypeptide is Tryptophan synthase alpha chain (Listeria innocua serovar 6a (strain ATCC BAA-680 / CLIP 11262)).